Here is a 305-residue protein sequence, read N- to C-terminus: Glutaminase (305 aa).

Substrate-binding residues include Ser-61, Asn-113, Glu-158, Asn-165, Tyr-189, Tyr-241, and Val-259.

Belongs to the glutaminase family. In terms of assembly, homotetramer.

The enzyme catalyses L-glutamine + H2O = L-glutamate + NH4(+). This chain is Glutaminase, found in Clostridium botulinum (strain 657 / Type Ba4).